The chain runs to 427 residues: Glutamate-1-semialdehyde 2,1-aminomutase (427 aa).

Residue Lys-265 is modified to N6-(pyridoxal phosphate)lysine.

It belongs to the class-III pyridoxal-phosphate-dependent aminotransferase family. HemL subfamily. Homodimer. It depends on pyridoxal 5'-phosphate as a cofactor.

The protein localises to the cytoplasm. The enzyme catalyses (S)-4-amino-5-oxopentanoate = 5-aminolevulinate. The protein operates within porphyrin-containing compound metabolism; protoporphyrin-IX biosynthesis; 5-aminolevulinate from L-glutamyl-tRNA(Glu): step 2/2. The protein is Glutamate-1-semialdehyde 2,1-aminomutase of Colwellia psychrerythraea (strain 34H / ATCC BAA-681) (Vibrio psychroerythus).